The following is a 188-amino-acid chain: Dual specificity protein phosphatase 18 (188 aa).

The Tyrosine-protein phosphatase domain occupies 19 to 160 (GLSQITKSLF…LIHYELQLFG (142 aa)). A sufficient for mitochondrial localization region spans residues 95-141 (MQKGRTLLHCAAGVSRSAALCLAYLMKYHAMSLVDAHTWTKSCRPII). The Phosphocysteine intermediate role is filled by C104.

The protein belongs to the protein-tyrosine phosphatase family. Non-receptor class dual specificity subfamily.

Its subcellular location is the cytoplasm. It localises to the nucleus. The protein localises to the mitochondrion inner membrane. The catalysed reaction is O-phospho-L-tyrosyl-[protein] + H2O = L-tyrosyl-[protein] + phosphate. It catalyses the reaction O-phospho-L-seryl-[protein] + H2O = L-seryl-[protein] + phosphate. It carries out the reaction O-phospho-L-threonyl-[protein] + H2O = L-threonyl-[protein] + phosphate. Can dephosphorylate single and diphosphorylated synthetic MAPK peptides, with preference for the phosphotyrosine and diphosphorylated forms over phosphothreonine. In vitro, dephosphorylates p-nitrophenyl phosphate (pNPP). This Mus musculus (Mouse) protein is Dual specificity protein phosphatase 18 (Dusp18).